A 345-amino-acid chain; its full sequence is Phosphoribosylformylglycinamidine cyclo-ligase (345 aa).

The protein belongs to the AIR synthase family.

It localises to the cytoplasm. The catalysed reaction is 2-formamido-N(1)-(5-O-phospho-beta-D-ribosyl)acetamidine + ATP = 5-amino-1-(5-phospho-beta-D-ribosyl)imidazole + ADP + phosphate + H(+). Its pathway is purine metabolism; IMP biosynthesis via de novo pathway; 5-amino-1-(5-phospho-D-ribosyl)imidazole from N(2)-formyl-N(1)-(5-phospho-D-ribosyl)glycinamide: step 2/2. The sequence is that of Phosphoribosylformylglycinamidine cyclo-ligase from Shewanella baltica (strain OS185).